The following is a 199-amino-acid chain: MDFKIEHTWDGFPVKHEPVFIRLNPGDRGVMMDISAPFFRDPPAPLGEPGKPFNELWDYEVVEAFFLNDITEQYLEVELCPHGQHLVLLLSGRRNVWKQELPLSFRMSRGETKWEGKAYLPWSYFPPNVTKFNSFAIHGSKDKRSYEALYPVPQHELQQGQKPDFHCLEYFKSFNFNTLLGEEWKQPESDLWLIEKCDI.

It belongs to the UPF0462 family.

This chain is UPF0462 protein C4orf33 (C4orf33), found in Homo sapiens (Human).